The chain runs to 441 residues: Ribosomal protein uS12 methylthiotransferase RimO (441 aa).

The MTTase N-terminal domain maps to 6–116 (QKVGIVSLGC…VVAAVHEAAP (111 aa)). Residues cysteine 15, cysteine 51, cysteine 80, cysteine 147, cysteine 151, and cysteine 154 each coordinate [4Fe-4S] cluster. In terms of domain architecture, Radical SAM core spans 133–370 (LTPRHYAYLK…MAAQQEISER (238 aa)). The TRAM domain maps to 373–439 (AQKVGTVIEA…EYDLWGSLAG (67 aa)).

It belongs to the methylthiotransferase family. RimO subfamily. [4Fe-4S] cluster serves as cofactor.

The protein localises to the cytoplasm. The catalysed reaction is L-aspartate(89)-[ribosomal protein uS12]-hydrogen + (sulfur carrier)-SH + AH2 + 2 S-adenosyl-L-methionine = 3-methylsulfanyl-L-aspartate(89)-[ribosomal protein uS12]-hydrogen + (sulfur carrier)-H + 5'-deoxyadenosine + L-methionine + A + S-adenosyl-L-homocysteine + 2 H(+). In terms of biological role, catalyzes the methylthiolation of an aspartic acid residue of ribosomal protein uS12. The protein is Ribosomal protein uS12 methylthiotransferase RimO of Rhodospirillum rubrum (strain ATCC 11170 / ATH 1.1.1 / DSM 467 / LMG 4362 / NCIMB 8255 / S1).